The primary structure comprises 364 residues: tRNA N6-adenosine threonylcarbamoyltransferase (364 aa).

The Fe cation site is built by histidine 115 and histidine 119. Residues 137–141 (LVSGG), aspartate 170, glycine 183, and asparagine 288 each bind substrate. Aspartate 316 is a binding site for Fe cation.

The protein belongs to the KAE1 / TsaD family. Fe(2+) serves as cofactor.

The protein localises to the cytoplasm. The catalysed reaction is L-threonylcarbamoyladenylate + adenosine(37) in tRNA = N(6)-L-threonylcarbamoyladenosine(37) in tRNA + AMP + H(+). Functionally, required for the formation of a threonylcarbamoyl group on adenosine at position 37 (t(6)A37) in tRNAs that read codons beginning with adenine. Is involved in the transfer of the threonylcarbamoyl moiety of threonylcarbamoyl-AMP (TC-AMP) to the N6 group of A37, together with TsaE and TsaB. TsaD likely plays a direct catalytic role in this reaction. This chain is tRNA N6-adenosine threonylcarbamoyltransferase, found in Bartonella tribocorum (strain CIP 105476 / IBS 506).